Consider the following 619-residue polypeptide: MNETIACTPESAVFEAPQLQFNEEGWGPCELPDAFKDIPYQPFSKSDRLGKISDWTGTAQTDKKYPNKYASQFGGGNQYAYYHEEDETTFHLVDSARIQKQPHQRGRFRGNLRNQRGRGRGGRGGVQAGGMTTLSKNATKGRDQRRGTTRKWGARPPPKIRDASVAVRPDWVTVEEMDFPRLSKLSLPNVEKGEDITTCGTLEYYDKTYDRVNVKNEKPLQRVDRIFHTVTTTDDPVIRLLSKSHGNVYATDAILATIMCCTRSNYSWDIVIEKIGDKLFMDKRDNTEFDLLTVNETAIEPPNEDGNSLNSPRNLAIEATFINHNFSQQVLKSGEKEPKYKFDQPNPFIGDDEDGEVASVAYRYRKWDLNNGIELVARCEHDAVLLTPQGDTQFLTIKALNEWDSKVANGVEWRQKLDTQRGAVLANELRNNSCKLAKWTVQALLAGSDQIKFGYVSRAHVRDSSRHVILGTQQFKPQEFANQINLSMDNAWGILRCIIDICMKQKDGKYLIMKDPNKPMIRLYDIPDNTFESDGEEEEGDDGEAFQTYAYGPSAATTAAATAAANAATAAAAVAAAAAAAAAAATTTPAATETVATATTEATTPTTATKTTAPAAAQK.

A disordered region spans residues 99–160 (QKQPHQRGRF…KWGARPPPKI (62 aa)). A compositionally biased stretch (basic residues) spans 100–121 (KQPHQRGRFRGNLRNQRGRGRG). Residues 288 to 302 (EFDLLTVNETAIEPP) form an RNA gate region. The disordered stretch occupies residues 588 to 619 (TPAATETVATATTEATTPTTATKTTAPAAAQK).

This sequence belongs to the eIF-3 subunit D family. As to quaternary structure, component of the eukaryotic translation initiation factor 3 (eIF-3) complex.

Its subcellular location is the cytoplasm. MRNA cap-binding component of the eukaryotic translation initiation factor 3 (eIF-3) complex, which is involved in protein synthesis of a specialized repertoire of mRNAs and, together with other initiation factors, stimulates binding of mRNA and methionyl-tRNAi to the 40S ribosome. The eIF-3 complex specifically targets and initiates translation of a subset of mRNAs involved in cell proliferation. In the eIF-3 complex, eif3d specifically recognizes and binds the 7-methylguanosine cap of a subset of mRNAs. The protein is Eukaryotic translation initiation factor 3 subunit D of Aedes aegypti (Yellowfever mosquito).